The following is a 443-amino-acid chain: Chromosome partition protein MukF (443 aa).

Residues 209 to 237 form a leucine-zipper region; it reads LDETSGNLRELQDTLNAAGDKLQAQLLRI.

The protein belongs to the MukF family. In terms of assembly, interacts, and probably forms a ternary complex, with MukE and MukB via its C-terminal region. The complex formation is stimulated by calcium or magnesium. It is required for an interaction between MukE and MukB.

It is found in the cytoplasm. It localises to the nucleoid. Involved in chromosome condensation, segregation and cell cycle progression. May participate in facilitating chromosome segregation by condensation DNA from both sides of a centrally located replisome during cell division. Not required for mini-F plasmid partitioning. Probably acts via its interaction with MukB and MukE. Overexpression results in anucleate cells. It has a calcium binding activity. In Actinobacillus pleuropneumoniae serotype 7 (strain AP76), this protein is Chromosome partition protein MukF.